The chain runs to 660 residues: Acetyl-coenzyme A synthetase (660 aa).

CoA-binding positions include 197–200 (RGGK) and T317. ATP is bound by residues 397–399 (GEP), 421–426 (DTFWQT), D512, and R528. S536 contributes to the CoA binding site. Residue R539 coordinates ATP. Positions 550 and 555 each coordinate Mg(2+). The residue at position 625 (K625) is an N6-acetyllysine.

It belongs to the ATP-dependent AMP-binding enzyme family. Requires Mg(2+) as cofactor. Acetylated. Deacetylation by the SIR2-homolog deacetylase activates the enzyme.

It carries out the reaction acetate + ATP + CoA = acetyl-CoA + AMP + diphosphate. Functionally, catalyzes the conversion of acetate into acetyl-CoA (AcCoA), an essential intermediate at the junction of anabolic and catabolic pathways. AcsA undergoes a two-step reaction. In the first half reaction, AcsA combines acetate with ATP to form acetyl-adenylate (AcAMP) intermediate. In the second half reaction, it can then transfer the acetyl group from AcAMP to the sulfhydryl group of CoA, forming the product AcCoA. This chain is Acetyl-coenzyme A synthetase, found in Herminiimonas arsenicoxydans.